The primary structure comprises 116 residues: MKRVYSIKSKNELDLVFKEKKSVGNGYFVIYFIPHETPHFKYAISIGKKFGNAVERNQAKRRLRYIVSNYSNYINPKYRFVIVVRPQSNLLPYDLIKENITKLLIKAKLIEKEAQN.

This sequence belongs to the RnpA family. As to quaternary structure, consists of a catalytic RNA component (M1 or rnpB) and a protein subunit.

It catalyses the reaction Endonucleolytic cleavage of RNA, removing 5'-extranucleotides from tRNA precursor.. In terms of biological role, RNaseP catalyzes the removal of the 5'-leader sequence from pre-tRNA to produce the mature 5'-terminus. It can also cleave other RNA substrates such as 4.5S RNA. The protein component plays an auxiliary but essential role in vivo by binding to the 5'-leader sequence and broadening the substrate specificity of the ribozyme. The sequence is that of Ribonuclease P protein component from Acholeplasma laidlawii (strain PG-8A).